Here is a 274-residue protein sequence, read N- to C-terminus: Bis(5'-nucleosyl)-tetraphosphatase, symmetrical (274 aa).

It belongs to the Ap4A hydrolase family.

The enzyme catalyses P(1),P(4)-bis(5'-adenosyl) tetraphosphate + H2O = 2 ADP + 2 H(+). Functionally, hydrolyzes diadenosine 5',5'''-P1,P4-tetraphosphate to yield ADP. This chain is Bis(5'-nucleosyl)-tetraphosphatase, symmetrical, found in Shewanella baltica (strain OS185).